We begin with the raw amino-acid sequence, 681 residues long: Transmembrane protein 168-A (681 aa).

The next 9 membrane-spanning stretches (helical) occupy residues 16 to 36 (FLRC…CLGM), 47 to 67 (MILV…ILYY), 73 to 93 (SASL…LCFL), 135 to 155 (PVVI…ASIS), 156 to 176 (LVFD…ALII), 184 to 204 (LALP…FQSL), 252 to 272 (FSLF…AFKL), 281 to 301 (VIPG…VFLV), and 346 to 365 (LVLF…WQVA). Residue Asn-517 is glycosylated (N-linked (GlcNAc...) asparagine).

The protein belongs to the TMEM168 family.

It is found in the nucleus membrane. In terms of biological role, plays a key role in maintaining the cardiac electrical stability by modulating cell surface expression of SCN5A. This is Transmembrane protein 168-A (tmem168a) from Danio rerio (Zebrafish).